A 160-amino-acid polypeptide reads, in one-letter code: Troponin C, isoform 2 (160 aa).

EF-hand domains lie at 15–50, 51–86, 92–127, and 128–160; these read DQIE…MGQA, FEER…FVVN, GLEE…LDDN, and VSEE…MSGE. Ca(2+)-binding residues include Asp64, Asp66, Ser68, Glu70, and Glu75. Ca(2+)-binding residues include Asp141, Asp143, Ser145, Thr147, and Glu152.

This sequence belongs to the troponin C family. Pharyngeal muscle.

This is Troponin C, isoform 2 (tnc-2) from Caenorhabditis elegans.